The chain runs to 526 residues: UDP-glycosyltransferase UGT5 (526 aa).

Over 1–474 the chain is Lumenal; sequence MIFFYFLTLT…TAAVDMPWYQ (474 aa). Residues asparagine 49, asparagine 124, and asparagine 283 are each glycosylated (N-linked (GlcNAc...) asparagine). Residues 475-495 form a helical membrane-spanning segment; that stretch reads YLLLDVIAFLIFILVSVILII. The Cytoplasmic portion of the chain corresponds to 496 to 526; it reads YYGVKISLRYLCALIFGNSSSLKPTKKVKDN.

The protein belongs to the UDP-glycosyltransferase family.

It is found in the microsome membrane. Catalyzes the transfer of a glycosyl group from a UDP-sugar to an acceptor molecule. The chain is UDP-glycosyltransferase UGT5 from Dactylopius coccus (Cochineal).